Reading from the N-terminus, the 322-residue chain is Acetyl-coenzyme A carboxylase carboxyl transferase subunit alpha 2 (322 aa).

In terms of domain architecture, CoA carboxyltransferase C-terminal spans 37–294 (EINRLSARSE…KRVLQESLRN (258 aa)).

This sequence belongs to the AccA family. In terms of assembly, acetyl-CoA carboxylase is a heterohexamer composed of biotin carboxyl carrier protein (AccB), biotin carboxylase (AccC) and two subunits each of ACCase subunit alpha (AccA) and ACCase subunit beta (AccD).

Its subcellular location is the cytoplasm. It carries out the reaction N(6)-carboxybiotinyl-L-lysyl-[protein] + acetyl-CoA = N(6)-biotinyl-L-lysyl-[protein] + malonyl-CoA. It participates in lipid metabolism; malonyl-CoA biosynthesis; malonyl-CoA from acetyl-CoA: step 1/1. Component of the acetyl coenzyme A carboxylase (ACC) complex. First, biotin carboxylase catalyzes the carboxylation of biotin on its carrier protein (BCCP) and then the CO(2) group is transferred by the carboxyltransferase to acetyl-CoA to form malonyl-CoA. In terms of biological role, confers resistance to the endogenous polyketide antibiotic thailandamide. Can replace the endogenous gene in S.typhimurium, conferring slow growth and resistance to thailandamide. Can also replace the endogenous gene in E.coli, conferring resistance to thailandamide. This is Acetyl-coenzyme A carboxylase carboxyl transferase subunit alpha 2 from Burkholderia thailandensis (strain ATCC 700388 / DSM 13276 / CCUG 48851 / CIP 106301 / E264).